The primary structure comprises 413 residues: Arginine biosynthesis bifunctional protein ArgJ (413 aa).

Residues Thr160, Lys186, Thr197, Glu284, Asn408, and Ser413 each contribute to the substrate site. The active-site Nucleophile is the Thr197.

This sequence belongs to the ArgJ family. In terms of assembly, heterotetramer of two alpha and two beta chains.

It localises to the cytoplasm. It carries out the reaction N(2)-acetyl-L-ornithine + L-glutamate = N-acetyl-L-glutamate + L-ornithine. It catalyses the reaction L-glutamate + acetyl-CoA = N-acetyl-L-glutamate + CoA + H(+). The protein operates within amino-acid biosynthesis; L-arginine biosynthesis; L-ornithine and N-acetyl-L-glutamate from L-glutamate and N(2)-acetyl-L-ornithine (cyclic): step 1/1. Its pathway is amino-acid biosynthesis; L-arginine biosynthesis; N(2)-acetyl-L-ornithine from L-glutamate: step 1/4. Its function is as follows. Catalyzes two activities which are involved in the cyclic version of arginine biosynthesis: the synthesis of N-acetylglutamate from glutamate and acetyl-CoA as the acetyl donor, and of ornithine by transacetylation between N(2)-acetylornithine and glutamate. The chain is Arginine biosynthesis bifunctional protein ArgJ from Burkholderia mallei (strain ATCC 23344).